Here is a 288-residue protein sequence, read N- to C-terminus: Bifunctional protein FolD (288 aa).

NADP(+)-binding positions include Gly166–Ser168 and Ile232.

This sequence belongs to the tetrahydrofolate dehydrogenase/cyclohydrolase family. As to quaternary structure, homodimer.

It carries out the reaction (6R)-5,10-methylene-5,6,7,8-tetrahydrofolate + NADP(+) = (6R)-5,10-methenyltetrahydrofolate + NADPH. The catalysed reaction is (6R)-5,10-methenyltetrahydrofolate + H2O = (6R)-10-formyltetrahydrofolate + H(+). It participates in one-carbon metabolism; tetrahydrofolate interconversion. In terms of biological role, catalyzes the oxidation of 5,10-methylenetetrahydrofolate to 5,10-methenyltetrahydrofolate and then the hydrolysis of 5,10-methenyltetrahydrofolate to 10-formyltetrahydrofolate. This Yersinia pseudotuberculosis serotype O:1b (strain IP 31758) protein is Bifunctional protein FolD.